A 424-amino-acid polypeptide reads, in one-letter code: Histidine--tRNA ligase (424 aa).

It belongs to the class-II aminoacyl-tRNA synthetase family. Homodimer.

Its subcellular location is the cytoplasm. The enzyme catalyses tRNA(His) + L-histidine + ATP = L-histidyl-tRNA(His) + AMP + diphosphate + H(+). The sequence is that of Histidine--tRNA ligase from Edwardsiella ictaluri (strain 93-146).